The sequence spans 509 residues: Maturase K (509 aa).

This sequence belongs to the intron maturase 2 family. MatK subfamily.

Its subcellular location is the plastid. It localises to the chloroplast. Usually encoded in the trnK tRNA gene intron. Probably assists in splicing its own and other chloroplast group II introns. The chain is Maturase K from Austrocylindropuntia vestita (Cactus).